The chain runs to 122 residues: Large ribosomal subunit protein uL14 (122 aa).

This sequence belongs to the universal ribosomal protein uL14 family. As to quaternary structure, part of the 50S ribosomal subunit. Forms a cluster with proteins L3 and L19. In the 70S ribosome, L14 and L19 interact and together make contacts with the 16S rRNA in bridges B5 and B8.

In terms of biological role, binds to 23S rRNA. Forms part of two intersubunit bridges in the 70S ribosome. The sequence is that of Large ribosomal subunit protein uL14 from Staphylococcus carnosus (strain TM300).